A 919-amino-acid polypeptide reads, in one-letter code: GPI ethanolamine phosphate transferase 1 (919 aa).

The Cytoplasmic segment spans residues 1–8 (MWSRHRLY). The helical transmembrane segment at 9–29 (FIVAGVLFHLFYLWSIFDIYF) threads the bilayer. The Lumenal portion of the chain corresponds to 30-456 (VSPLVHGMKQ…TTYNWRFIRT (427 aa)). N-linked (GlcNAc...) asparagine glycosylation is found at Asn-138, Asn-196, Asn-201, Asn-285, and Asn-311. The chain crosses the membrane as a helical span at residues 457–477 (IVTLGFLGWIVYSFSIFLRLF). Over 478-487 (ILNRDYNSHK) the chain is Cytoplasmic. The helical transmembrane segment at 488-508 (SLLNYFIFGSLTIILNYVLYY) threads the bilayer. The Lumenal portion of the chain corresponds to 509 to 510 (QK). Residues 511 to 531 (APFNYYMYLFFPLIFWSEIFT) form a helical membrane-spanning segment. Residues 532 to 558 (DRVVLDDGVKEFLKGISIPKRIILVSA) lie on the Cytoplasmic side of the membrane. A helical membrane pass occupies residues 559–579 (IILVYESIVYAFFDRWIFSLI). The Lumenal segment spans residues 580–598 (FNMLSFYPLICGYRDWKRN). A helical membrane pass occupies residues 599 to 619 (TLWFITGAAISVFTLLDAVKI). Glu-620 is a topological domain (cytoplasmic). Residues 621 to 641 (SLTQINIASGLIVLTALSGFL) traverse the membrane as a helical segment. Topologically, residues 642 to 653 (HLRKQLNSYTTT) are lumenal. A helical transmembrane segment spans residues 654–674 (VFICQILLVILMVLATNKSIV). At 675-686 (SLQNRTGLPRDA) the chain is on the cytoplasmic side. Residues 687–707 (QVAGWVILVVSLLLMPLIHYM) traverse the membrane as a helical segment. Topologically, residues 708-718 (KPNNNYKVRML) are lumenal. Residues 719–739 (IIFLTFAPTFIILTISFESFF) form a helical membrane-spanning segment. The Cytoplasmic portion of the chain corresponds to 740–773 (YLVFSAYIVQWIEIESKLKEQTPNTSHYKQLIRV). A helical membrane pass occupies residues 774 to 794 (TIIGFFLLQNAFFGTGNVASI). Residues 795-815 (SSFSLDSVYRLMPIFDPFPMG) lie on the Lumenal side of the membrane. Residues 816–836 (ALLVIKLIIPYIILSAGLGIL) traverse the membrane as a helical segment. At 837–845 (NLKLHIKDY) the chain is on the cytoplasmic side. A helical membrane pass occupies residues 846 to 866 (TISTLIISTSDILSLNFFYLL). Over 867–882 (KTEGSWLDIGITISNY) the chain is Lumenal. A helical transmembrane segment spans residues 883-903 (CLAILSSLFMLILEIVAHVVL). Topologically, residues 904–919 (KNVQLSKPVIASKKTN) are cytoplasmic.

The protein belongs to the PIGG/PIGN/PIGO family. PIGN subfamily.

It localises to the endoplasmic reticulum membrane. Its pathway is glycolipid biosynthesis; glycosylphosphatidylinositol-anchor biosynthesis. Functionally, ethanolamine phosphate transferase involved in glycosylphosphatidylinositol-anchor biosynthesis. Transfers ethanolamine phosphate to the first alpha-1,4-linked mannose of the glycosylphosphatidylinositol precursor of GPI-anchor. This Kluyveromyces lactis (strain ATCC 8585 / CBS 2359 / DSM 70799 / NBRC 1267 / NRRL Y-1140 / WM37) (Yeast) protein is GPI ethanolamine phosphate transferase 1 (MCD4).